The following is a 391-amino-acid chain: Processive diacylglycerol beta-glucosyltransferase (391 aa).

Belongs to the glycosyltransferase 28 family. UgtP subfamily.

It localises to the cell membrane. The catalysed reaction is a 1,2-diacyl-3-O-(beta-D-glucopyranosyl)-sn-glycerol + UDP-alpha-D-glucose = a 1,2-diacyl-3-O-(beta-D-Glc-(1-&gt;6)-beta-D-Glc)-sn-glycerol + UDP + H(+). It carries out the reaction a 1,2-diacyl-sn-glycerol + UDP-alpha-D-glucose = a 1,2-diacyl-3-O-(beta-D-glucopyranosyl)-sn-glycerol + UDP + H(+). The protein operates within glycolipid metabolism; diglucosyl-diacylglycerol biosynthesis. Functionally, processive glucosyltransferase involved in the biosynthesis of both the bilayer- and non-bilayer-forming membrane glucolipids. Is able to successively transfer two glucosyl residues to diacylglycerol (DAG), thereby catalyzing the formation of beta-monoglucosyl-DAG (3-O-(beta-D-glucopyranosyl)-1,2-diacyl-sn-glycerol) and beta-diglucosyl-DAG (3-O-(beta-D-glucopyranosyl-beta-(1-&gt;6)-D-glucopyranosyl)-1,2-diacyl-sn-glycerol). Beta-diglucosyl-DAG is the predominant glycolipid found in Bacillales and is also used as a membrane anchor for lipoteichoic acid (LTA). This is Processive diacylglycerol beta-glucosyltransferase from Staphylococcus haemolyticus (strain JCSC1435).